Here is a 155-residue protein sequence, read N- to C-terminus: Transcriptional repressor NrdR (155 aa).

A zinc finger spans residues 3–34 (CPYCGHLEDRVVDSRETQDGQATRRRRACLSC). Residues 49–139 (PQVVKKDGRR…VYRAFRDVGE (91 aa)) form the ATP-cone domain.

The protein belongs to the NrdR family. It depends on Zn(2+) as a cofactor.

In terms of biological role, negatively regulates transcription of bacterial ribonucleotide reductase nrd genes and operons by binding to NrdR-boxes. This chain is Transcriptional repressor NrdR, found in Anaeromyxobacter sp. (strain K).